We begin with the raw amino-acid sequence, 372 residues long: Anhydro-N-acetylmuramic acid kinase (372 aa).

Gly-12–Asp-19 serves as a coordination point for ATP.

This sequence belongs to the anhydro-N-acetylmuramic acid kinase family.

The catalysed reaction is 1,6-anhydro-N-acetyl-beta-muramate + ATP + H2O = N-acetyl-D-muramate 6-phosphate + ADP + H(+). The protein operates within amino-sugar metabolism; 1,6-anhydro-N-acetylmuramate degradation. It participates in cell wall biogenesis; peptidoglycan recycling. Its function is as follows. Catalyzes the specific phosphorylation of 1,6-anhydro-N-acetylmuramic acid (anhMurNAc) with the simultaneous cleavage of the 1,6-anhydro ring, generating MurNAc-6-P. Is required for the utilization of anhMurNAc either imported from the medium or derived from its own cell wall murein, and thus plays a role in cell wall recycling. This Coxiella burnetii (strain CbuK_Q154) (Coxiella burnetii (strain Q154)) protein is Anhydro-N-acetylmuramic acid kinase.